The following is a 427-amino-acid chain: 3-phosphoshikimate 1-carboxyvinyltransferase (427 aa).

3-phosphoshikimate contacts are provided by K22, S23, and R27. Position 22 (K22) interacts with phosphoenolpyruvate. Phosphoenolpyruvate is bound by residues G96 and R124. S169, S170, Q171, S197, D313, N336, and K340 together coordinate 3-phosphoshikimate. Q171 lines the phosphoenolpyruvate pocket. D313 (proton acceptor) is an active-site residue. Phosphoenolpyruvate-binding residues include R344, R386, and K411.

Belongs to the EPSP synthase family. As to quaternary structure, monomer.

The protein localises to the cytoplasm. The catalysed reaction is 3-phosphoshikimate + phosphoenolpyruvate = 5-O-(1-carboxyvinyl)-3-phosphoshikimate + phosphate. It functions in the pathway metabolic intermediate biosynthesis; chorismate biosynthesis; chorismate from D-erythrose 4-phosphate and phosphoenolpyruvate: step 6/7. Catalyzes the transfer of the enolpyruvyl moiety of phosphoenolpyruvate (PEP) to the 5-hydroxyl of shikimate-3-phosphate (S3P) to produce enolpyruvyl shikimate-3-phosphate and inorganic phosphate. In Salmonella paratyphi A (strain ATCC 9150 / SARB42), this protein is 3-phosphoshikimate 1-carboxyvinyltransferase.